A 212-amino-acid polypeptide reads, in one-letter code: FMN-dependent NADH:quinone oxidoreductase (212 aa).

Residues serine 9, serine 15–serine 17, and threonine 138–glycine 141 each bind FMN.

It belongs to the azoreductase type 1 family. In terms of assembly, homodimer. Requires FMN as cofactor.

It catalyses the reaction 2 a quinone + NADH + H(+) = 2 a 1,4-benzosemiquinone + NAD(+). The enzyme catalyses N,N-dimethyl-1,4-phenylenediamine + anthranilate + 2 NAD(+) = 2-(4-dimethylaminophenyl)diazenylbenzoate + 2 NADH + 2 H(+). Functionally, quinone reductase that provides resistance to thiol-specific stress caused by electrophilic quinones. Also exhibits azoreductase activity. Catalyzes the reductive cleavage of the azo bond in aromatic azo compounds to the corresponding amines. This Delftia acidovorans (strain DSM 14801 / SPH-1) protein is FMN-dependent NADH:quinone oxidoreductase.